A 136-amino-acid polypeptide reads, in one-letter code: Histone H3 (136 aa).

The tract at residues 1–43 (MARTKQTARKSTGGKAPRKQLATKAARKSAPASGGVKKPHRYR) is disordered. N6,N6,N6-trimethyllysine; alternate is present on residues lysine 5 and lysine 10. An N6,N6-dimethyllysine; alternate mark is found at lysine 5 and lysine 10. N6-acetyllysine; alternate occurs at positions 5 and 10. An N6-methyllysine; alternate modification is found at lysine 5. Serine 11 is modified (phosphoserine). Residues lysine 15 and lysine 24 each carry the N6-acetyllysine modification. N6,N6,N6-trimethyllysine; alternate is present on lysine 28. Lysine 28 is subject to N6,N6-dimethyllysine; alternate. The residue at position 28 (lysine 28) is an N6-methyllysine; alternate. Residue serine 29 is modified to Phosphoserine. Lysine 37 is modified (N6,N6,N6-trimethyllysine; alternate). At lysine 37 the chain carries N6,N6-dimethyllysine; alternate. Residue lysine 37 is modified to N6-methyllysine; alternate. Lysine 80 carries the N6-methyllysine modification.

It belongs to the histone H3 family. As to quaternary structure, the nucleosome is a histone octamer containing two molecules each of H2A, H2B, H3 and H4 assembled in one H3-H4 heterotetramer and two H2A-H2B heterodimers. The octamer wraps approximately 147 bp of DNA. Interacts (via N-terminal tail mono-acetylated on Lys-15) with swsn-4 (via Bromo domain); the interaction is direct. Phosphorylated at Ser-11 and Ser-29 during M phase. Phosphorylation of Ser-11 requires air-2 but not air-1. Dephosphorylated by gsp-1 and/or gsp-2 during chromosome segregation. Post-translationally, acetylation is generally linked to gene activation. In terms of processing, methylation at Lys-5 is linked to gene activation and is absent from male inactive X chromosome chromatin. Methylation at Lys-10 is linked to gene repression and is enriched in male inactive X chromosome chromatin. Methylation at Lys-37 occurs on the entire length of autosomes during meiotic prophase. Trimethylation at Lys-10 and Lys-37 is specifically antagonized by jmjd-2. Dimethylation and trimethylation at Lys-28 occurs in all nuclei. The mes-2-mes-3-mes-6 complex may be responsible for Lys-28 methylation in most of the germline and in the early embryo.

The protein resides in the nucleus. It is found in the chromosome. Functionally, core component of nucleosome. Nucleosomes wrap and compact DNA into chromatin, limiting DNA accessibility to the cellular machineries which require DNA as a template. Histones thereby play a central role in transcription regulation, DNA repair, DNA replication and chromosomal stability. DNA accessibility is regulated via a complex set of post-translational modifications of histones, also called histone code, and nucleosome remodeling. This Caenorhabditis elegans protein is Histone H3 (his-2).